A 669-amino-acid polypeptide reads, in one-letter code: DNA ligase (669 aa).

Residues 33-37, 82-83, and E115 contribute to the NAD(+) site; these read DVTYD and SL. The active-site N6-AMP-lysine intermediate is the K117. NAD(+)-binding residues include R138, E172, K286, and K310. Zn(2+)-binding residues include C401, C404, C417, and C422. One can recognise a BRCT domain in the interval 589 to 669; sequence VDSSFLFGKK…DIKNLVNLDD (81 aa).

It belongs to the NAD-dependent DNA ligase family. LigA subfamily. Mg(2+) is required as a cofactor. Requires Mn(2+) as cofactor.

It catalyses the reaction NAD(+) + (deoxyribonucleotide)n-3'-hydroxyl + 5'-phospho-(deoxyribonucleotide)m = (deoxyribonucleotide)n+m + AMP + beta-nicotinamide D-nucleotide.. Its function is as follows. DNA ligase that catalyzes the formation of phosphodiester linkages between 5'-phosphoryl and 3'-hydroxyl groups in double-stranded DNA using NAD as a coenzyme and as the energy source for the reaction. It is essential for DNA replication and repair of damaged DNA. This chain is DNA ligase, found in Borrelia duttonii (strain Ly).